The following is a 1114-amino-acid chain: Isoleucine--tRNA ligase (1114 aa).

Positions 61–71 (PTANGQPGTHH) match the 'HIGH' region motif. Positions 640–644 (KMSKH) match the 'KMSKS' region motif. An ATP-binding site is contributed by K643.

This sequence belongs to the class-I aminoacyl-tRNA synthetase family. IleS type 2 subfamily. Monomer. Requires Zn(2+) as cofactor.

It localises to the cytoplasm. The enzyme catalyses tRNA(Ile) + L-isoleucine + ATP = L-isoleucyl-tRNA(Ile) + AMP + diphosphate. Functionally, catalyzes the attachment of isoleucine to tRNA(Ile). As IleRS can inadvertently accommodate and process structurally similar amino acids such as valine, to avoid such errors it has two additional distinct tRNA(Ile)-dependent editing activities. One activity is designated as 'pretransfer' editing and involves the hydrolysis of activated Val-AMP. The other activity is designated 'posttransfer' editing and involves deacylation of mischarged Val-tRNA(Ile). This chain is Isoleucine--tRNA ligase, found in Cutibacterium acnes (strain DSM 16379 / KPA171202) (Propionibacterium acnes).